A 307-amino-acid chain; its full sequence is 2,4-diacetylphloroglucinol hydrolase (307 aa).

4 residues coordinate Zn(2+): histidine 142, glutamate 173, histidine 283, and glutamate 287.

Belongs to the DAPG/phloretin hydrolase family. Requires Zn(2+) as cofactor.

It catalyses the reaction 2,4-diacetylphloroglucinol + H2O = 2-acetylphloroglucinol + acetate. Activity is strongly reduced by pyoluteorin, an antifungal compound produced by the bacterium. Its function is as follows. Hydrolase that specifically degrades the potent antimicrobial compound 2,4-diacetylphloroglucinol (DAPG) to equimolar amounts of mildly toxic monoacetylphloroglucinol (MAPG) and acetate. Does not degrade other compounds with structures similar to DAPG, such as MAPG and triacetylphloroglucinol, suggesting strict substrate specificity. Degradation of DAPG to MAPG may provide an additional means of fine-tuning levels of this antibiotic or may help avoid accumulation of a metabolite that at high levels may become toxic to the producing bacterium. This chain is 2,4-diacetylphloroglucinol hydrolase, found in Pseudomonas protegens (strain DSM 19095 / LMG 27888 / CFBP 6595 / CHA0).